A 463-amino-acid polypeptide reads, in one-letter code: Hexose-6-phosphate:phosphate antiporter (463 aa).

Residues 1 to 24 (MLAFLNQVRKPTLDLPLDVRRKMW) lie on the Cytoplasmic side of the membrane. A helical transmembrane segment spans residues 25-45 (FKPFMQSYLVVFIGYLTMYLI). The Periplasmic segment spans residues 46–60 (RKNFNIAQNDMISTY). The chain crosses the membrane as a helical span at residues 61-81 (GLSMTELGMIGLGFSITYGVG). Residues 82–96 (KTLVSYYADGKNTKQ) lie on the Cytoplasmic side of the membrane. The helical transmembrane segment at 97-117 (FLPFMLILSAICMLGFSASMG) threads the bilayer. Residues 118–122 (AGSTS) are Periplasmic-facing. The helical transmembrane segment at 123 to 143 (LFLMIAFYALSGFFQSTGGSC) threads the bilayer. At 144-159 (SYSTITKWTPRRKRGT) the chain is on the cytoplasmic side. Residues 160-180 (FLGFWNISHNLGGAGAAGVAL) traverse the membrane as a helical segment. At 181–189 (FGANYLFDG) the chain is on the periplasmic side. A helical membrane pass occupies residues 190 to 210 (HVIGMFIFPSIIALIVGFIGL). At 211 to 259 (RFGSDSPESYGLGKAEELFGEEISEEDKETEENEMTKWQIFVEYVLKNK) the chain is on the cytoplasmic side. The helical transmembrane segment at 260 to 280 (VIWLLCFSNIFLYVVRIGIDQ) threads the bilayer. Residues 281–297 (WSTVYAFQELKLSKEVA) lie on the Periplasmic side of the membrane. Residues 298–318 (IQGFTLFEVGALVGTLLWGWL) traverse the membrane as a helical segment. Topologically, residues 319–326 (SDLANGRR) are cytoplasmic. The helical transmembrane segment at 327–347 (ALVACVALALIIATLGVYQHA) threads the bilayer. Residues 348 to 357 (SNQYVYLASL) lie on the Periplasmic side of the membrane. Residues 358 to 378 (FALGFLVFGPQLLIGVAAVGF) traverse the membrane as a helical segment. The Cytoplasmic portion of the chain corresponds to 379-382 (VPKK). A helical membrane pass occupies residues 383 to 403 (AIGAADGIKGTFAYLIGDSFA). Topologically, residues 404–425 (KLGLGMIADGTPVFGLTGWAGT) are periplasmic. Residues 426–446 (FAALDAAAIGCICLMAMVAVM) traverse the membrane as a helical segment. Residues 447–463 (EERKIRREKKIQQVNIA) lie on the Cytoplasmic side of the membrane.

Belongs to the major facilitator superfamily. Organophosphate:Pi antiporter (OPA) (TC 2.A.1.4) family.

It localises to the cell inner membrane. In terms of biological role, mediates the exchange of external hexose 6-phosphate and internal inorganic phosphate. The protein is Hexose-6-phosphate:phosphate antiporter (uhpT) of Salmonella typhimurium (strain LT2 / SGSC1412 / ATCC 700720).